The chain runs to 315 residues: Manganese-dependent 2,3-dihydroxybiphenyl 1,2-dioxygenase (315 aa).

VOC domains lie at Lys7–Asp121 and Arg150–Gly273. The Mn(2+) site is built by His153, His216, and Glu269.

It belongs to the extradiol ring-cleavage dioxygenase family. Homotetramer. Requires Mn(2+) as cofactor.

It catalyses the reaction biphenyl-2,3-diol + O2 = 2-hydroxy-6-oxo-6-phenylhexa-2,4-dienoate + H(+). The protein operates within xenobiotic degradation; biphenyl degradation; 2-hydroxy-2,4-pentadienoate and benzoate from biphenyl: step 3/4. Its function is as follows. Catalyzes the meta-cleavage of the hydroxylated biphenyl ring. The enzyme can oxidize a wide range of substrates, and the substrate preference order is 2,3-dihydroxybiphenyl &gt; 3-methylcatechol &gt; catechol &gt; 4-methylcatechol &gt; 4-chlorocatechol. This Geobacillus genomosp. 3 protein is Manganese-dependent 2,3-dihydroxybiphenyl 1,2-dioxygenase (bphC).